A 324-amino-acid polypeptide reads, in one-letter code: MTKTIFESKTEGNWFLGSFQAFNYFTCFGNDESYEAIQDVFHRLLSTLKVEGLQLHVVQMTSDFQLLAFLVDMINQEYSRHIKVTQHKGAILVSEDDQLFLVHLPKEGTSLEKFFDLKNDNNFGDTILIATHNEGKTKEFRELFGKLGLKVENLNDYPDLPEVEETGMTFEENARLKAETISKLTGKMVISDDSGLKVDALGGLPGVWSARFSGPDATDARNNAKLLHELAMVFDKERRSAQFHTTLVVSAPNKESLVVEAEWPGYIGTEPKGENGFGYDPLFIVGEGSRTAAELSAQEKNNLSHRGQAVRKLMEVFPKWQLEN.

The tract at residues 1-127 (MTKTIFESKT…KNDNNFGDTI (127 aa)) is unknown. The interval 128–324 (LIATHNEGKT…EVFPKWQLEN (197 aa)) is NTP pyrophosphatase. 131-136 (THNEGK) is a binding site for substrate. 2 residues coordinate Mg(2+): E164 and D193. D193 functions as the Proton acceptor in the catalytic mechanism. Substrate is bound by residues S194, 277–280 (FGYD), K300, and 305–306 (HR).

This sequence belongs to the HAM1 NTPase family. As to quaternary structure, homodimer. Requires Mg(2+) as cofactor.

The catalysed reaction is XTP + H2O = XMP + diphosphate + H(+). It catalyses the reaction dITP + H2O = dIMP + diphosphate + H(+). The enzyme catalyses ITP + H2O = IMP + diphosphate + H(+). Functionally, pyrophosphatase that catalyzes the hydrolysis of nucleoside triphosphates to their monophosphate derivatives, with a high preference for the non-canonical purine nucleotides XTP (xanthosine triphosphate), dITP (deoxyinosine triphosphate) and ITP. Seems to function as a house-cleaning enzyme that removes non-canonical purine nucleotides from the nucleotide pool, thus preventing their incorporation into DNA/RNA and avoiding chromosomal lesions. This chain is dITP/XTP pyrophosphatase, found in Streptococcus agalactiae serotype III (strain NEM316).